The following is a 382-amino-acid chain: Beta-1,4-galactosyltransferase 6 (382 aa).

The Cytoplasmic portion of the chain corresponds to 1-15 (MSALKRMMRVSNRSL). The chain crosses the membrane as a helical; Signal-anchor for type II membrane protein span at residues 16–35 (IAFIFFFSLSTSCLYFIYVA). At 36 to 382 (PGIANTYLFM…MPELAPVEDY (347 aa)) the chain is on the lumenal side. 6 N-linked (GlcNAc...) asparagine glycosylation sites follow: asparagine 71, asparagine 75, asparagine 83, asparagine 84, asparagine 99, and asparagine 122. An intrachain disulfide couples cysteine 108 to cysteine 152. UDP-alpha-D-galactose-binding positions include 163–167 (PFRNR), 202–204 (FNR), 229–230 (VD), tyrosine 258, and tryptophan 290. Residues cysteine 223 and cysteine 242 are joined by a disulfide bond. Mn(2+) is bound at residue aspartate 230. Residue 292-295 (GEDD) coordinates N-acetyl-D-glucosamine. The N-linked (GlcNAc...) asparagine glycan is linked to asparagine 307. Histidine 323 is a binding site for Mn(2+). Residue 323–324 (HH) coordinates UDP-alpha-D-galactose. Arginine 334 is an N-acetyl-D-glucosamine binding site. Asparagine 367 is a glycosylation site (N-linked (GlcNAc...) asparagine).

This sequence belongs to the glycosyltransferase 7 family. Requires Mn(2+) as cofactor. Mg(2+) serves as cofactor. It depends on Ca(2+) as a cofactor. As to expression, highest expression in brain with lower levels found in lungs, heart, skeletal muscle and kidney. Lowest expression in testis, liver and spleen.

It is found in the golgi apparatus. The protein resides in the golgi stack membrane. It carries out the reaction a beta-D-glucosyl-(1&lt;-&gt;1')-N-acylsphing-4-enine + UDP-alpha-D-galactose = a beta-D-Gal-(1-&gt;4)-beta-D-Glc-(1&lt;-&gt;1)-Cer(d18:1(4E)) + UDP + H(+). It participates in protein modification; protein glycosylation. Its pathway is sphingolipid metabolism. Inhibited by EDTA. Functionally, catalyzes the synthesis of lactosylceramide (LacCer) via the transfer of galactose from UDP-galactose to glucosylceramide (GlcCer). LacCer is the starting point in the biosynthesis of all gangliosides (membrane-bound glycosphingolipids) which play pivotal roles in the CNS including neuronal maturation and axonal and myelin formation. In Rattus norvegicus (Rat), this protein is Beta-1,4-galactosyltransferase 6.